A 988-amino-acid chain; its full sequence is Squamosa promoter-binding-like protein 16 (988 aa).

A disordered region spans residues 52 to 79 (GTPVDLTRPSKKVRSGSPGSGGGGGGNY). Positions 69 to 78 (PGSGGGGGGN) are enriched in gly residues. Residues 79 to 156 (YPKCQVDNCK…DGHNRRRRKT (78 aa)) form an SBP-type zinc finger. Cys82, Cys87, Cys104, His107, Cys123, Cys126, His130, and Cys142 together coordinate Zn(2+). The Bipartite nuclear localization signal motif lies at 139-155 (KRSCRRRLDGHNRRRRK). Disordered stretches follow at residues 240 to 262 (RKNP…SSPS) and 289 to 416 (GFGN…DTST). Polar residues-rich tracts occupy residues 250 to 262 (NPQN…SSPS), 301 to 311 (LTSSDHSATTS), and 327 to 358 (RTSS…FTSS). The span at 368–379 (ASSTKYYSSASS) shows a compositional bias: low complexity.

Zn(2+) is required as a cofactor.

The protein resides in the nucleus. Its function is as follows. Trans-acting factor that binds specifically to the consensus nucleotide sequence 5'-TNCGTACAA-3'. This chain is Squamosa promoter-binding-like protein 16 (SPL16), found in Arabidopsis thaliana (Mouse-ear cress).